Reading from the N-terminus, the 693-residue chain is Polyribonucleotide nucleotidyltransferase (693 aa).

Residues aspartate 489 and aspartate 495 each coordinate Mg(2+). One can recognise a KH domain in the interval 556–615 (PQIHIMNVNPAKIKDVVGRGGSVVKGIVEKTGAQIDTSDSGEVKIFAKDKRSLDLAKSMV). Residues 625–693 (GQIYKGKIVK…GRVKLSLVAR (69 aa)) form the S1 motif domain.

It belongs to the polyribonucleotide nucleotidyltransferase family. As to quaternary structure, component of the RNA degradosome, which is a multiprotein complex involved in RNA processing and mRNA degradation. Mg(2+) serves as cofactor.

It is found in the cytoplasm. It catalyses the reaction RNA(n+1) + phosphate = RNA(n) + a ribonucleoside 5'-diphosphate. Involved in mRNA degradation. Catalyzes the phosphorolysis of single-stranded polyribonucleotides processively in the 3'- to 5'-direction. This is Polyribonucleotide nucleotidyltransferase from Francisella philomiragia subsp. philomiragia (strain ATCC 25017 / CCUG 19701 / FSC 153 / O#319-036).